We begin with the raw amino-acid sequence, 356 residues long: Heat-inducible transcription repressor HrcA (356 aa).

It belongs to the HrcA family.

Negative regulator of class I heat shock genes (grpE-dnaK-dnaJ and groELS operons). Prevents heat-shock induction of these operons. In Chelativorans sp. (strain BNC1), this protein is Heat-inducible transcription repressor HrcA.